The chain runs to 397 residues: Cathepsin E-B (397 aa).

The first 16 residues, 1–16 (MRQILVLLLFVTLVYG), serve as a signal peptide directing secretion. A propeptide spans 17-49 (LIRVPLKRQKSIRKTPKEKGKLSHVWTQQGIDM) (activation peptide). The Peptidase A1 domain occupies 74–385 (YFGEISIGTP…DRGNNRVGLA (312 aa)). An N-linked (GlcNAc...) asparagine glycan is attached at asparagine 86. Aspartate 92 is a catalytic residue. Cysteines 105 and 110 form a disulfide. The N-linked (GlcNAc...) asparagine glycan is linked to asparagine 130. Cysteine 268 and cysteine 272 are joined by a disulfide. Residue aspartate 277 is part of the active site. A disulfide bridge connects residues cysteine 310 and cysteine 344.

Belongs to the peptidase A1 family. Homodimer; disulfide-linked. Glycosylated. Contains high mannose-type oligosaccharide. In terms of tissue distribution, expressed predominantly in the anterior and posterior adult stomach and at much lower levels in the larval foregut.

Its subcellular location is the endosome. The enzyme catalyses Similar to cathepsin D, but slightly broader specificity.. Its function is as follows. May have a role in immune function. Probably involved in the processing of antigenic peptides during MHC class II-mediated antigen presentation. The sequence is that of Cathepsin E-B (ctse-b) from Xenopus laevis (African clawed frog).